The chain runs to 86 residues: Small ribosomal subunit protein uS15 (86 aa).

Residues 1 to 22 are disordered; that stretch reads MSIDTQKVIEDNKRSSADTGSP. The span at 7-16 shows a compositional bias: basic and acidic residues; sequence KVIEDNKRSS.

This sequence belongs to the universal ribosomal protein uS15 family. As to quaternary structure, part of the 30S ribosomal subunit. Forms a bridge to the 50S subunit in the 70S ribosome, contacting the 23S rRNA.

One of the primary rRNA binding proteins, it binds directly to 16S rRNA where it helps nucleate assembly of the platform of the 30S subunit by binding and bridging several RNA helices of the 16S rRNA. In terms of biological role, forms an intersubunit bridge (bridge B4) with the 23S rRNA of the 50S subunit in the ribosome. This is Small ribosomal subunit protein uS15 from Stenotrophomonas maltophilia (strain R551-3).